The chain runs to 134 residues: Arsenate reductase (134 aa).

Residues Cys-11, Cys-83, and Cys-90 each act as nucleophile in the active site. Intrachain disulfides connect Cys-11/Cys-83 and Cys-83/Cys-90.

It belongs to the low molecular weight phosphotyrosine protein phosphatase family. Thioredoxin-coupled ArsC subfamily.

The protein resides in the cytoplasm. It carries out the reaction arsenate + [thioredoxin]-dithiol + H(+) = arsenite + [thioredoxin]-disulfide + H2O. In terms of biological role, catalyzes the reduction of arsenate [As(V)] to arsenite [As(III)]. The chain is Arsenate reductase from Bacillus anthracis (strain A0248).